The sequence spans 241 residues: DnaA regulatory inactivator Hda (241 aa).

Belongs to the DnaA family. HdA subfamily. As to quaternary structure, the active form seems to be an ADP-bound monomer. Forms the RIDA complex (regulatory inactivation of DnaA) of ATP-DnaA, ADP-Hda and the DNA-loaded beta sliding clamp (dnaN).

In terms of biological role, mediates the interaction of DNA replication initiator protein DnaA with DNA polymerase subunit beta sliding clamp (dnaN). Stimulates hydrolysis of ATP-DnaA to ADP-DnaA, rendering DnaA inactive for reinitiation, a process called regulatory inhibition of DnaA or RIDA. This chain is DnaA regulatory inactivator Hda, found in Salmonella arizonae (strain ATCC BAA-731 / CDC346-86 / RSK2980).